An 898-amino-acid chain; its full sequence is Nitrate reductase [NAD(P)H] (898 aa).

The segment covering 1 to 15 (MAASVENRRFTHHEP) has biased composition (basic and acidic residues). The tract at residues 1–65 (MAASVENRRF…SSSEDENEND (65 aa)) is disordered. Cys-180 serves as a coordination point for Mo-molybdopterin. The Cytochrome b5 heme-binding domain maps to 528–603 (SKMFSMSEVK…LEDYRIGELI (76 aa)). The heme site is built by His-563 and His-586. The region spanning 642 to 754 (GAKIPTKLVY…KGPLGHVEYT (113 aa)) is the FAD-binding FR-type domain. Residues 694 to 697 (RAYT), 711 to 715 (VVKIY), Phe-716, Phe-723, 728 to 730 (LMS), and Thr-781 each bind FAD.

It belongs to the nitrate reductase family. Homodimer. The cofactor is FAD. It depends on heme as a cofactor. Mo-molybdopterin is required as a cofactor.

The enzyme catalyses nitrite + NAD(+) + H2O = nitrate + NADH + H(+). It carries out the reaction nitrite + NADP(+) + H2O = nitrate + NADPH + H(+). Its function is as follows. Nitrate reductase is a key enzyme involved in the first step of nitrate assimilation in plants, fungi and bacteria. This is Nitrate reductase [NAD(P)H] (NIA1) from Betula pendula (European white birch).